We begin with the raw amino-acid sequence, 295 residues long: Bifunctional protein FolD (295 aa).

Residues 166-168, Ser-191, and Ile-232 each bind NADP(+); that span reads GRS.

This sequence belongs to the tetrahydrofolate dehydrogenase/cyclohydrolase family. As to quaternary structure, homodimer.

The enzyme catalyses (6R)-5,10-methylene-5,6,7,8-tetrahydrofolate + NADP(+) = (6R)-5,10-methenyltetrahydrofolate + NADPH. It carries out the reaction (6R)-5,10-methenyltetrahydrofolate + H2O = (6R)-10-formyltetrahydrofolate + H(+). Its pathway is one-carbon metabolism; tetrahydrofolate interconversion. In terms of biological role, catalyzes the oxidation of 5,10-methylenetetrahydrofolate to 5,10-methenyltetrahydrofolate and then the hydrolysis of 5,10-methenyltetrahydrofolate to 10-formyltetrahydrofolate. The protein is Bifunctional protein FolD of Rhodopseudomonas palustris (strain BisB5).